We begin with the raw amino-acid sequence, 222 residues long: Pyrrolidone-carboxylate peptidase (222 aa).

Catalysis depends on residues glutamate 80, cysteine 146, and histidine 170.

The protein belongs to the peptidase C15 family. As to quaternary structure, homotetramer.

It localises to the cytoplasm. It carries out the reaction Release of an N-terminal pyroglutamyl group from a polypeptide, the second amino acid generally not being Pro.. Its function is as follows. Removes 5-oxoproline from various penultimate amino acid residues except L-proline. This chain is Pyrrolidone-carboxylate peptidase, found in Mycobacterium tuberculosis (strain ATCC 25177 / H37Ra).